The chain runs to 443 residues: Xaa-Pro dipeptidase (443 aa).

5 residues coordinate Mn(2+): aspartate 246, aspartate 257, histidine 339, glutamate 384, and glutamate 423.

This sequence belongs to the peptidase M24B family. Bacterial-type prolidase subfamily. It depends on Mn(2+) as a cofactor.

It catalyses the reaction Xaa-L-Pro dipeptide + H2O = an L-alpha-amino acid + L-proline. Its function is as follows. Splits dipeptides with a prolyl residue in the C-terminal position. The chain is Xaa-Pro dipeptidase from Escherichia coli (strain SMS-3-5 / SECEC).